The following is a 491-amino-acid chain: Glutamyl-tRNA(Gln) amidotransferase subunit A (491 aa).

Residues lysine 78 and serine 158 each act as charge relay system in the active site. The active-site Acyl-ester intermediate is serine 182.

It belongs to the amidase family. GatA subfamily. In terms of assembly, heterotrimer of A, B and C subunits.

It catalyses the reaction L-glutamyl-tRNA(Gln) + L-glutamine + ATP + H2O = L-glutaminyl-tRNA(Gln) + L-glutamate + ADP + phosphate + H(+). Its function is as follows. Allows the formation of correctly charged Gln-tRNA(Gln) through the transamidation of misacylated Glu-tRNA(Gln) in organisms which lack glutaminyl-tRNA synthetase. The reaction takes place in the presence of glutamine and ATP through an activated gamma-phospho-Glu-tRNA(Gln). This Afipia carboxidovorans (strain ATCC 49405 / DSM 1227 / KCTC 32145 / OM5) (Oligotropha carboxidovorans) protein is Glutamyl-tRNA(Gln) amidotransferase subunit A.